The chain runs to 507 residues: ATP synthase subunit alpha, chloroplastic (507 aa).

Residue 170 to 177 coordinates ATP; the sequence is GDRQTGKT.

Belongs to the ATPase alpha/beta chains family. F-type ATPases have 2 components, CF(1) - the catalytic core - and CF(0) - the membrane proton channel. CF(1) has five subunits: alpha(3), beta(3), gamma(1), delta(1), epsilon(1). CF(0) has four main subunits: a, b, b' and c.

The protein resides in the plastid. It localises to the chloroplast thylakoid membrane. The catalysed reaction is ATP + H2O + 4 H(+)(in) = ADP + phosphate + 5 H(+)(out). Functionally, produces ATP from ADP in the presence of a proton gradient across the membrane. The alpha chain is a regulatory subunit. The protein is ATP synthase subunit alpha, chloroplastic of Piper cenocladum (Ant piper).